The following is a 63-amino-acid chain: Large ribosomal subunit protein uL30 (63 aa).

Belongs to the universal ribosomal protein uL30 family. Part of the 50S ribosomal subunit.

The chain is Large ribosomal subunit protein uL30 from Rickettsia canadensis (strain McKiel).